The chain runs to 962 residues: Protein kinase ORF73 (962 aa).

2 disordered regions span residues 1–28 (MADR…NDRP) and 62–152 (STPA…RATT). A compositionally biased stretch (acidic residues) spans 81-90 (DSDDDDEEDN). The span at 143–152 (YDTTGRRATT) shows a compositional bias: polar residues. In terms of domain architecture, Protein kinase spans 301 to 595 (LRAAPVLGKG…ASDLLKSPRY (295 aa)). ATP-binding positions include 307–315 (LGKGYFGTV) and Lys324. The Proton acceptor role is filled by Asp434.

This sequence belongs to the protein kinase superfamily. Ser/Thr protein kinase family.

It carries out the reaction L-seryl-[protein] + ATP = O-phospho-L-seryl-[protein] + ADP + H(+). The catalysed reaction is L-threonyl-[protein] + ATP = O-phospho-L-threonyl-[protein] + ADP + H(+). This Ictaluridae (bullhead catfishes) protein is Protein kinase ORF73 (ORF73).